The chain runs to 424 residues: Enolase (424 aa).

(2R)-2-phosphoglycerate is bound at residue Gln-162. Glu-204 (proton donor) is an active-site residue. Mg(2+) contacts are provided by Asp-241, Glu-284, and Asp-311. The (2R)-2-phosphoglycerate site is built by Lys-336, Arg-365, Ser-366, and Lys-387. The Proton acceptor role is filled by Lys-336.

Belongs to the enolase family. Requires Mg(2+) as cofactor.

The protein resides in the cytoplasm. It localises to the secreted. It is found in the cell surface. The catalysed reaction is (2R)-2-phosphoglycerate = phosphoenolpyruvate + H2O. Its pathway is carbohydrate degradation; glycolysis; pyruvate from D-glyceraldehyde 3-phosphate: step 4/5. Catalyzes the reversible conversion of 2-phosphoglycerate (2-PG) into phosphoenolpyruvate (PEP). It is essential for the degradation of carbohydrates via glycolysis. This is Enolase from Rhizobium leguminosarum bv. trifolii (strain WSM2304).